The following is a 184-amino-acid chain: Ribulose bisphosphate carboxylase small subunit, chloroplastic 5 (184 aa).

Residues 1–43 (MAAAMMNKTIVVSKDGCARSSSIPKVATNKMGFASAVAMKKSR) constitute a chloroplast transit peptide.

Belongs to the RuBisCO small chain family. Heterohexadecamer of 8 large and 8 small subunits.

It is found in the plastid. The protein localises to the chloroplast. In terms of biological role, ruBisCO catalyzes two reactions: the carboxylation of D-ribulose 1,5-bisphosphate, the primary event in carbon dioxide fixation, as well as the oxidative fragmentation of the pentose substrate. Both reactions occur simultaneously and in competition at the same active site. Although the small subunit is not catalytic it is essential for maximal activity. This Acetabularia peniculus (Green alga) protein is Ribulose bisphosphate carboxylase small subunit, chloroplastic 5.